We begin with the raw amino-acid sequence, 373 residues long: Plasmepsin VIII (373 aa).

Residues 1-21 form the signal peptide; the sequence is MNKFFVFPLLLILNSIVLVKS. The Peptidase A1 domain maps to 50-370; it reads FIGEISIGNP…EKDNMRIGLA (321 aa). Catalysis depends on residues D68 and D258.

Belongs to the peptidase A1 family.

During the development in the mosquito vector, plays an essential role in sporozoite egress from the oocyst and sporozoite gliding motility, which is required for the invasion of salivary glands and subsequent transmission to the host. The polypeptide is Plasmepsin VIII (Plasmodium berghei (strain Anka)).